Here is a 360-residue protein sequence, read N- to C-terminus: Phospho-N-acetylmuramoyl-pentapeptide-transferase (360 aa).

Transmembrane regions (helical) follow at residues 26 to 46 (AILGLLTALVFSLWFGPKLIE), 74 to 94 (MGGLLILAAIFISVLLWGDLG), 97 to 117 (YVWVMLFVLGSFGLIGFIDDY), 134 to 154 (YILQSLAALLIAFFLYATAAN), 168 to 188 (VMPQLGAVFIVLAYFTIVGAS), 199 to 219 (GLAIMPTVMVAAAFALIAYLS), 236 to 256 (SGELVIVCTAIVGAGLGFLWF), 263 to 283 (VFMGDVGSLSLGAALGTIAVL), 288 to 308 (ILLVIMGGVFVMETLSVILQV), and 338 to 358 (VIVRFWIISIFLVLLGLATLK).

The protein belongs to the glycosyltransferase 4 family. MraY subfamily. Mg(2+) is required as a cofactor.

It localises to the cell inner membrane. The enzyme catalyses UDP-N-acetyl-alpha-D-muramoyl-L-alanyl-gamma-D-glutamyl-meso-2,6-diaminopimeloyl-D-alanyl-D-alanine + di-trans,octa-cis-undecaprenyl phosphate = di-trans,octa-cis-undecaprenyl diphospho-N-acetyl-alpha-D-muramoyl-L-alanyl-D-glutamyl-meso-2,6-diaminopimeloyl-D-alanyl-D-alanine + UMP. It participates in cell wall biogenesis; peptidoglycan biosynthesis. In terms of biological role, catalyzes the initial step of the lipid cycle reactions in the biosynthesis of the cell wall peptidoglycan: transfers peptidoglycan precursor phospho-MurNAc-pentapeptide from UDP-MurNAc-pentapeptide onto the lipid carrier undecaprenyl phosphate, yielding undecaprenyl-pyrophosphoryl-MurNAc-pentapeptide, known as lipid I. The polypeptide is Phospho-N-acetylmuramoyl-pentapeptide-transferase (Shewanella baltica (strain OS185)).